The chain runs to 474 residues: Zinc finger protein 230 (474 aa).

The KRAB domain maps to 8–76 (VTFKDVAVFF…ETATQREGNS (69 aa)). Residues 80–167 (TIAEAGPHED…PQQFHSGEKS (88 aa)) are KRNB. 9 C2H2-type zinc fingers span residues 168–190 (HTCNECGKSFCYISALRIHQRVH), 196–218 (SKCDMRGKEFSQSSCLQTRERVH), 224–246 (FKCEQCGKGFRCRAILQVHCKLH), 252–274 (YICEKCGRAFIHDFQLQKHQIIH), 280–302 (FKCEICGKSFCLRSSLNRHCMVH), 308–330 (YKSEECGKGFTDSLDLHKHQIIH), 336–358 (YNCKECGKSFRWSSYLLIHQRIH), 364–386 (YRCEECGKGYISKSGLNLHQRVH), and 392–414 (YNCKECGKSFSRASSILNHKKLH). The C2H2-type 10; atypical zinc-finger motif lies at 420–442 (FKCEDCGKRLVHRSFCKDQQGDH).

The protein belongs to the krueppel C2H2-type zinc-finger protein family.

Its subcellular location is the nucleus. In terms of biological role, may be involved in transcriptional regulation. The protein is Zinc finger protein 230 (ZNF230) of Homo sapiens (Human).